The chain runs to 288 residues: Probable prolyl 4-hydroxylase 9 (288 aa).

Residues 1-12 (MKSRLKSYRRKK) lie on the Cytoplasmic side of the membrane. Residues 13–33 (LGLATVIVFCSLCFLFGFYGS) traverse the membrane as a helical; Signal-anchor for type II membrane protein segment. The Lumenal segment spans residues 34-288 (TLLSQNVPRV…KWIRDQDQEE (255 aa)). One can recognise a Fe2OG dioxygenase domain in the interval 164 to 283 (HGESFNILRY…KWVATKWIRD (120 aa)). Fe cation is bound by residues histidine 182 and aspartate 184. 2 N-linked (GlcNAc...) asparagine glycosylation sites follow: asparagine 221 and asparagine 255. Histidine 264 is a Fe cation binding site. A 2-oxoglutarate-binding site is contributed by lysine 274.

Belongs to the P4HA family. Fe(2+) is required as a cofactor. It depends on L-ascorbate as a cofactor.

It is found in the endoplasmic reticulum membrane. It localises to the golgi apparatus. It catalyses the reaction L-prolyl-[collagen] + 2-oxoglutarate + O2 = trans-4-hydroxy-L-prolyl-[collagen] + succinate + CO2. Catalyzes the post-translational formation of 4-hydroxyproline in -Xaa-Pro-Gly- sequences in proline-rich peptide sequences of plant glycoproteins and other proteins. Hydroxyprolines are important constituent of many plant cell wall glycoproteins such as extensins, hydroxyproline-rich glycoproteins, lectins and arabinogalactan proteins. The chain is Probable prolyl 4-hydroxylase 9 from Arabidopsis thaliana (Mouse-ear cress).